A 188-amino-acid chain; its full sequence is Protein salivary glands marred (188 aa).

Belongs to the TNFAIP8 family. As to quaternary structure, interacts with the Ste20-like MAP kinase msn.

It is found in the cytoplasm. The protein localises to the cytoskeleton. Important for modulating JNK signaling, cytoskeletal remodeling and autophagy in larval salivary glands. During salivary gland development, involved in the positive regulation of the JNK signaling pathway, acting downstream of the TNF ligand egr and upstream of bsk. In Drosophila melanogaster (Fruit fly), this protein is Protein salivary glands marred.